Consider the following 218-residue polypeptide: MTPAGDTPERGSGDRAVAEAAERAKATGARNIPVFDDLPLPADTANLRDGVSLSDSLLALLPLVGVWRGEGEGRDADGDYRFGQQIVVSHDGGDYLNWEARSWRLDESGEYHSPALRETGYWRFVTDPADPHETQAIELLLAHSSGYIELFYGRPLNQSSWELVTDALARSKSGTLVGGAKRLYGIVEGGDLGYVEERVDADGGLVPHLSARLSRYVG.

Residues 1 to 24 (MTPAGDTPERGSGDRAVAEAAERA) form a disordered region. The span at 7-24 (TPERGSGDRAVAEAAERA) shows a compositional bias: basic and acidic residues. The GXWXGXG motif lies at 65 to 71 (GVWRGEG). Positions 181 and 208 each coordinate heme b.

The protein belongs to the nitrobindin family. In terms of assembly, homodimer. Requires heme b as cofactor.

The catalysed reaction is peroxynitrite = nitrate. It participates in nitrogen metabolism. Functionally, heme-binding protein able to scavenge peroxynitrite and to protect free L-tyrosine against peroxynitrite-mediated nitration, by acting as a peroxynitrite isomerase that converts peroxynitrite to nitrate. Therefore, this protein likely plays a role in peroxynitrite sensing and in the detoxification of reactive nitrogen and oxygen species (RNS and ROS, respectively). Is able to bind nitric oxide (NO) in vitro, but may act as a sensor of peroxynitrite levels in vivo. This chain is Peroxynitrite isomerase 2, found in Mycolicibacterium smegmatis (strain ATCC 700084 / mc(2)155) (Mycobacterium smegmatis).